Consider the following 306-residue polypeptide: tRNA dimethylallyltransferase 1 (306 aa).

13-20 (GPTASGKT) contacts ATP. Position 15–20 (15–20 (TASGKT)) interacts with substrate. Residues 38-41 (DSRQ) are interaction with substrate tRNA.

This sequence belongs to the IPP transferase family. Monomer. Mg(2+) is required as a cofactor.

It catalyses the reaction adenosine(37) in tRNA + dimethylallyl diphosphate = N(6)-dimethylallyladenosine(37) in tRNA + diphosphate. In terms of biological role, catalyzes the transfer of a dimethylallyl group onto the adenine at position 37 in tRNAs that read codons beginning with uridine, leading to the formation of N6-(dimethylallyl)adenosine (i(6)A). The protein is tRNA dimethylallyltransferase 1 of Azobacteroides pseudotrichonymphae genomovar. CFP2.